Here is a 229-residue protein sequence, read N- to C-terminus: ATP synthase subunit a (229 aa).

6 consecutive transmembrane segments (helical) span residues 25 to 45 (ADAVVYTWLIMIGLVVLSIAA), 82 to 102 (FFPLVATLALFILVSNLIGLI), 104 to 124 (GFFPPTANINTTAACAVVVFV), 142 to 162 (FLGPIAWLAPMMFFIEVIGHL), 181 to 201 (LVLIIFFGLAPFVVPLPMMLM), and 202 to 222 (GVLVSFIQAFVFMLLAMIYIQ).

This sequence belongs to the ATPase A chain family. In terms of assembly, F-type ATPases have 2 components, CF(1) - the catalytic core - and CF(0) - the membrane proton channel. CF(1) has five subunits: alpha(3), beta(3), gamma(1), delta(1), epsilon(1). CF(0) has three main subunits: a(1), b(2) and c(9-12). The alpha and beta chains form an alternating ring which encloses part of the gamma chain. CF(1) is attached to CF(0) by a central stalk formed by the gamma and epsilon chains, while a peripheral stalk is formed by the delta and b chains.

It localises to the cell inner membrane. Its function is as follows. Key component of the proton channel; it plays a direct role in the translocation of protons across the membrane. In Geobacter sp. (strain M21), this protein is ATP synthase subunit a.